Here is a 202-residue protein sequence, read N- to C-terminus: Putative 3-methyladenine DNA glycosylase (202 aa).

Belongs to the DNA glycosylase MPG family.

In Clostridium botulinum (strain Alaska E43 / Type E3), this protein is Putative 3-methyladenine DNA glycosylase.